Here is a 122-residue protein sequence, read N- to C-terminus: Large ribosomal subunit protein uL14 (122 aa).

It belongs to the universal ribosomal protein uL14 family. Part of the 50S ribosomal subunit. Forms a cluster with proteins L3 and L19. In the 70S ribosome, L14 and L19 interact and together make contacts with the 16S rRNA in bridges B5 and B8.

Binds to 23S rRNA. Forms part of two intersubunit bridges in the 70S ribosome. The protein is Large ribosomal subunit protein uL14 of Rickettsia rickettsii (strain Iowa).